A 551-amino-acid polypeptide reads, in one-letter code: GMP synthase [glutamine-hydrolyzing] (551 aa).

Residues 40–233 (KILIVDFGSQ…VRKIAGLTGD (194 aa)) form the Glutamine amidotransferase type-1 domain. The Nucleophile role is filled by Cys117. Active-site residues include His207 and Glu209. The 193-residue stretch at 234–426 (WTMRAFREEE…LGLPEIFVGR (193 aa)) folds into the GMPS ATP-PPase domain. Position 261 to 267 (261 to 267 (SGGVDSA)) interacts with ATP.

Homodimer.

The enzyme catalyses XMP + L-glutamine + ATP + H2O = GMP + L-glutamate + AMP + diphosphate + 2 H(+). The protein operates within purine metabolism; GMP biosynthesis; GMP from XMP (L-Gln route): step 1/1. Its function is as follows. Catalyzes the synthesis of GMP from XMP. In Bradyrhizobium diazoefficiens (strain JCM 10833 / BCRC 13528 / IAM 13628 / NBRC 14792 / USDA 110), this protein is GMP synthase [glutamine-hydrolyzing].